Here is a 362-residue protein sequence, read N- to C-terminus: Protein RecA (362 aa).

Residue 65 to 72 coordinates ATP; sequence GPESSGKT. Residues 323–362 form a disordered region; it reads RVANGMEPLNEKSTKETADDKASGKTGENKQETIEEASKE. A compositionally biased stretch (basic and acidic residues) spans 331–362; it reads LNEKSTKETADDKASGKTGENKQETIEEASKE.

It belongs to the RecA family.

The protein localises to the cytoplasm. Functionally, can catalyze the hydrolysis of ATP in the presence of single-stranded DNA, the ATP-dependent uptake of single-stranded DNA by duplex DNA, and the ATP-dependent hybridization of homologous single-stranded DNAs. It interacts with LexA causing its activation and leading to its autocatalytic cleavage. The polypeptide is Protein RecA (Limosilactobacillus reuteri (strain DSM 20016) (Lactobacillus reuteri)).